Here is a 60-residue protein sequence, read N- to C-terminus: Large ribosomal subunit protein uL30 (60 aa).

It belongs to the universal ribosomal protein uL30 family. Part of the 50S ribosomal subunit.

This chain is Large ribosomal subunit protein uL30, found in Polaromonas sp. (strain JS666 / ATCC BAA-500).